The sequence spans 647 residues: Exoribonuclease 2 (647 aa).

One can recognise an RNB domain in the interval 192–519 (RIDLTSLDFV…NHRLLKAIIQ (328 aa)). One can recognise an S1 motif domain in the interval 564–646 (EQRFTAEIID…ETRNIVARPT (83 aa)).

The protein belongs to the RNR ribonuclease family. RNase II subfamily.

It is found in the cytoplasm. The catalysed reaction is Exonucleolytic cleavage in the 3'- to 5'-direction to yield nucleoside 5'-phosphates.. Its function is as follows. Involved in mRNA degradation. Hydrolyzes single-stranded polyribonucleotides processively in the 3' to 5' direction. This is Exoribonuclease 2 from Photorhabdus laumondii subsp. laumondii (strain DSM 15139 / CIP 105565 / TT01) (Photorhabdus luminescens subsp. laumondii).